Reading from the N-terminus, the 409-residue chain is N-carbamoyl-L-amino acid amidohydrolase (409 aa).

The a divalent metal cation site is built by His79, Asp90, Glu125, and His189. An N-carbamoyl-L-alpha-amino acid is bound by residues Gln192, His225, Asn273, Arg286, and Ala355. Residues 208–325 (GIAGLIWVKF…TTERLQEMAP (118 aa)) are involved in dimerization. His380 contributes to the a divalent metal cation binding site.

This sequence belongs to the peptidase M20 family. Homodimer. The cofactor is Mn(2+). Ni(2+) is required as a cofactor. Co(2+) serves as cofactor. It depends on Fe(2+) as a cofactor.

The catalysed reaction is an N-carbamoyl-L-alpha-amino acid + H2O + 2 H(+) = an L-alpha-amino acid + NH4(+) + CO2. The enzyme catalyses N-carbamoyl-L-methionine + H2O + 2 H(+) = L-methionine + NH4(+) + CO2. It catalyses the reaction N-acetyl-L-methionine + H2O = L-methionine + acetate. It carries out the reaction N-carbamoyl-L-alanine + H2O + 2 H(+) = L-alanine + NH4(+) + CO2. The catalysed reaction is N-carbamoyl-L-glutamate + H2O + 2 H(+) = L-glutamate + NH4(+) + CO2. The enzyme catalyses N-carbamoylglycine + H2O + 2 H(+) = glycine + NH4(+) + CO2. It catalyses the reaction N-carbamoyl-L-leucine + H2O + 2 H(+) = L-leucine + NH4(+) + CO2. In terms of biological role, catalyzes the hydrolysis of aliphatic N-carbamoyl-L-alpha-amino acids to free L-alpha-amino acids. Is strictly L-specific since it is inactive toward N-carbamoyl-D-alpha-amino acids. Is not able to use aromatic N-carbamoyl-L-alpha-amino acids like N-carbamoyl-L-tryptophan and N-carbamoyl-L-phenylalanine as substrates, but is also able to hydrolyze N-acetyl-L-methionine. This chain is N-carbamoyl-L-amino acid amidohydrolase, found in Geobacillus stearothermophilus (Bacillus stearothermophilus).